A 63-amino-acid polypeptide reads, in one-letter code: Large ribosomal subunit protein uL29 (63 aa).

The protein belongs to the universal ribosomal protein uL29 family.

The sequence is that of Large ribosomal subunit protein uL29 from Pseudomonas aeruginosa (strain UCBPP-PA14).